Consider the following 182-residue polypeptide: MNKLSTKLVVAIGIGAALYGILGLWGFSIAPNTFIKPALAILTVFGALFGPVAGLLIGLIGHTVTDTIAGWGIWWGWVISSGIIGFAMGFIQKRVGFSVKNGTYNKGDISYLAITGLIGIVIAIIFAGAFDIIVMGEPFDKIVIQVLGATIADVIVFLVLGLPITIGLAKSNKKHAHLKIEK.

5 helical membrane-spanning segments follow: residues 9 to 29 (VVAI…GFSI), 40 to 60 (AILT…IGLI), 71 to 91 (WGIW…MGFI), 114 to 134 (ITGL…DIIV), and 142 to 162 (IVIQ…VLGL).

The protein belongs to the UPF0397 family.

It is found in the cell membrane. The protein is UPF0397 protein BCQ_2505 of Bacillus cereus (strain Q1).